A 260-amino-acid chain; its full sequence is Ubiquinone/menaquinone biosynthesis C-methyltransferase UbiE (260 aa).

S-adenosyl-L-methionine is bound by residues T83, D104, and 132–133; that span reads NA.

This sequence belongs to the class I-like SAM-binding methyltransferase superfamily. MenG/UbiE family.

It carries out the reaction a 2-demethylmenaquinol + S-adenosyl-L-methionine = a menaquinol + S-adenosyl-L-homocysteine + H(+). It catalyses the reaction a 2-methoxy-6-(all-trans-polyprenyl)benzene-1,4-diol + S-adenosyl-L-methionine = a 5-methoxy-2-methyl-3-(all-trans-polyprenyl)benzene-1,4-diol + S-adenosyl-L-homocysteine + H(+). The protein operates within quinol/quinone metabolism; menaquinone biosynthesis; menaquinol from 1,4-dihydroxy-2-naphthoate: step 2/2. It participates in cofactor biosynthesis; ubiquinone biosynthesis. Its function is as follows. Methyltransferase required for the conversion of demethylmenaquinol (DMKH2) to menaquinol (MKH2) and the conversion of 2-polyprenyl-6-methoxy-1,4-benzoquinol (DDMQH2) to 2-polyprenyl-3-methyl-6-methoxy-1,4-benzoquinol (DMQH2). This chain is Ubiquinone/menaquinone biosynthesis C-methyltransferase UbiE, found in Bartonella tribocorum (strain CIP 105476 / IBS 506).